A 689-amino-acid polypeptide reads, in one-letter code: DNA ligase (689 aa).

NAD(+)-binding positions include 51–55, 100–101, and Glu129; these read DSEYD and SL. The active-site N6-AMP-lysine intermediate is Lys131. NAD(+)-binding residues include Arg152, Glu189, Lys308, and Lys332. Positions 426, 429, 444, and 450 each coordinate Zn(2+). The BRCT domain occupies 609–689; the sequence is ADEQPLKGQT…ELLALLAANS (81 aa).

Belongs to the NAD-dependent DNA ligase family. LigA subfamily. Mg(2+) is required as a cofactor. Requires Mn(2+) as cofactor.

The enzyme catalyses NAD(+) + (deoxyribonucleotide)n-3'-hydroxyl + 5'-phospho-(deoxyribonucleotide)m = (deoxyribonucleotide)n+m + AMP + beta-nicotinamide D-nucleotide.. In terms of biological role, DNA ligase that catalyzes the formation of phosphodiester linkages between 5'-phosphoryl and 3'-hydroxyl groups in double-stranded DNA using NAD as a coenzyme and as the energy source for the reaction. It is essential for DNA replication and repair of damaged DNA. The protein is DNA ligase of Shewanella sp. (strain ANA-3).